A 327-amino-acid polypeptide reads, in one-letter code: Melanoma-associated antigen B18 (327 aa).

Basic residues predominate over residues 1 to 19 (MPRGQKSKLRAREKRRQAR). The disordered stretch occupies residues 1 to 85 (MPRGQKSKLR…SSDDSEDTED (85 aa)). The span at 46 to 70 (MPTSPNMPMGEQSTFSHSYTSTSDQ) shows a compositional bias: polar residues. Residues 91–289 (INHKVVLLVQ…DSFPTLYEAA (199 aa)) enclose the MAGE domain.

In terms of assembly, interacts with LNX1. Expressed in testis, stomach, large intestine, small intestine, spleen, lymph node, bone marrow lymphocytes and blood T-lymphocytes. Not detected in brain, heart, lung, liver or kidney (at protein level).

The protein resides in the cytoplasm. In terms of biological role, may enhance ubiquitin ligase activity of RING-type zinc finger-containing E3 ubiquitin-protein ligases. Proposed to act through recruitment and/or stabilization of the Ubl-conjugating enzyme (E2) at the E3:substrate complex. This is Melanoma-associated antigen B18 from Mus musculus (Mouse).